The chain runs to 430 residues: Adenylosuccinate synthetase (430 aa).

GTP is bound by residues 12 to 18 (GDEGKGK) and 40 to 42 (GHT). The Proton acceptor role is filled by Asp-13. Residues Asp-13 and Gly-40 each coordinate Mg(2+). IMP-binding positions include 13-16 (DEGK), 38-41 (NAGH), Thr-128, Arg-142, Gln-223, Thr-238, and Arg-302. His-41 acts as the Proton donor in catalysis. Residue 298-304 (TTTGRPR) coordinates substrate. GTP-binding positions include Arg-304, 330–332 (SID), and 413–415 (SVG).

Belongs to the adenylosuccinate synthetase family. As to quaternary structure, homodimer. The cofactor is Mg(2+).

Its subcellular location is the cytoplasm. The catalysed reaction is IMP + L-aspartate + GTP = N(6)-(1,2-dicarboxyethyl)-AMP + GDP + phosphate + 2 H(+). It functions in the pathway purine metabolism; AMP biosynthesis via de novo pathway; AMP from IMP: step 1/2. Functionally, plays an important role in the de novo pathway of purine nucleotide biosynthesis. Catalyzes the first committed step in the biosynthesis of AMP from IMP. The polypeptide is Adenylosuccinate synthetase (Lactococcus lactis subsp. cremoris (strain MG1363)).